The primary structure comprises 402 residues: Olfactomedin-like protein 1 (402 aa).

A signal peptide spans 1–28 (MMVALRGASALLVLFLAAFLPPPQCTQD). Asn-66 carries an N-linked (GlcNAc...) asparagine glycan. A coiled-coil region spans residues 79–133 (SEYKSAVGNLALRVERAQREIDYIQYLREADECIESEDKTLAEMLLQEAEEEKKI). 2 N-linked (GlcNAc...) asparagine glycosylation sites follow: Asn-138 and Asn-183. The region spanning 140–397 (SCDNMLMGIK…QIIYKLQTKR (258 aa)) is the Olfactomedin-like domain. A disulfide bond links Cys-141 and Cys-324.

In terms of processing, highly N-glycosylated. In terms of tissue distribution, mainly expressed in the small intestine, liver, lung and heart.

The protein localises to the secreted. This Homo sapiens (Human) protein is Olfactomedin-like protein 1 (OLFML1).